The primary structure comprises 241 residues: Deoxynucleotide monophosphate kinase (241 aa).

Lysine 10 contributes to the dGMP binding site. 4 residues coordinate ATP: arginine 11, glycine 13, aspartate 15, and threonine 16. DGMP-binding residues include isoleucine 36 and lysine 37. Mg(2+) is bound at residue tyrosine 42. Arginine 68 lines the dGMP pocket. Mg(2+) contacts are provided by glutamine 85 and glutamate 108. The dGMP site is built by arginine 132, glycine 139, threonine 140, valine 144, tryptophan 152, aspartate 175, arginine 177, glutamine 178, glutamate 181, and threonine 208.

It belongs to the dNMP kinase family. As to quaternary structure, homodimer. Mg(2+) is required as a cofactor.

The catalysed reaction is dTMP + ATP = dTDP + ADP. The enzyme catalyses dGMP + ATP = dGDP + ADP. It catalyses the reaction 5-hydroxymethyl-dCMP + ATP = 5-hydroxymethyl-dCDP + ADP. Inhibited by pyridoxal 5'-phosphate and diethylpyrocarbonate. Functionally, allows the synthesis of deoxyribonucleoside triphosphates necessary for the rapid viral DNA replication. Phosphorylates dGMP, dTMP and 5-hydroxymethyl-dCMP (hmdCMP) while excluding dCMP and dAMP. The phosphorylation of 5-hydroxymethyl-dCMP represents the first step in the replacement of cytosine by hydroxymethylcytosine in new viral DNA genomes. The polypeptide is Deoxynucleotide monophosphate kinase (1) (Enterobacteria phage T4 (Bacteriophage T4)).